A 246-amino-acid chain; its full sequence is 3-deoxy-manno-octulosonate cytidylyltransferase (246 aa).

Belongs to the KdsB family. Homodimer.

It localises to the cytoplasm. It carries out the reaction 3-deoxy-alpha-D-manno-oct-2-ulosonate + CTP = CMP-3-deoxy-beta-D-manno-octulosonate + diphosphate. It participates in nucleotide-sugar biosynthesis; CMP-3-deoxy-D-manno-octulosonate biosynthesis; CMP-3-deoxy-D-manno-octulosonate from 3-deoxy-D-manno-octulosonate and CTP: step 1/1. It functions in the pathway bacterial outer membrane biogenesis; lipopolysaccharide biosynthesis. In terms of biological role, activates KDO (a required 8-carbon sugar) for incorporation into bacterial lipopolysaccharide in Gram-negative bacteria. This chain is 3-deoxy-manno-octulosonate cytidylyltransferase (kpsU), found in Escherichia coli.